Here is a 290-residue protein sequence, read N- to C-terminus: Pantothenate synthetase (290 aa).

34–41 serves as a coordination point for ATP; the sequence is MGNLHDGH. The active-site Proton donor is the histidine 41. Glutamine 65 is a binding site for (R)-pantoate. Glutamine 65 provides a ligand contact to beta-alanine. 156–159 contacts ATP; that stretch reads GKKD. Position 162 (glutamine 162) interacts with (R)-pantoate. Residues alanine 185 and 193–196 each bind ATP; that span reads LSSR.

Belongs to the pantothenate synthetase family. Homodimer.

The protein localises to the cytoplasm. It catalyses the reaction (R)-pantoate + beta-alanine + ATP = (R)-pantothenate + AMP + diphosphate + H(+). It functions in the pathway cofactor biosynthesis; (R)-pantothenate biosynthesis; (R)-pantothenate from (R)-pantoate and beta-alanine: step 1/1. Catalyzes the condensation of pantoate with beta-alanine in an ATP-dependent reaction via a pantoyl-adenylate intermediate. The protein is Pantothenate synthetase of Acidovorax ebreus (strain TPSY) (Diaphorobacter sp. (strain TPSY)).